A 541-amino-acid polypeptide reads, in one-letter code: Glucose-6-phosphate isomerase (541 aa).

Glutamate 346 serves as the catalytic Proton donor. Catalysis depends on residues histidine 377 and lysine 506.

Belongs to the GPI family.

Its subcellular location is the cytoplasm. The enzyme catalyses alpha-D-glucose 6-phosphate = beta-D-fructose 6-phosphate. Its pathway is carbohydrate biosynthesis; gluconeogenesis. The protein operates within carbohydrate degradation; glycolysis; D-glyceraldehyde 3-phosphate and glycerone phosphate from D-glucose: step 2/4. Functionally, catalyzes the reversible isomerization of glucose-6-phosphate to fructose-6-phosphate. This Rhizobium rhizogenes (strain K84 / ATCC BAA-868) (Agrobacterium radiobacter) protein is Glucose-6-phosphate isomerase.